A 364-amino-acid chain; its full sequence is D-alanine--D-alanine ligase (364 aa).

Residues 146 to 352 (KLCAADAGVE…FDELISRLLL (207 aa)) form the ATP-grasp domain. 179–234 (TERFAFPVFVKPANLGSSVGISKVHNAAELRPALDKACALDAKVLVEETITGREVE) contacts ATP. Mg(2+)-binding residues include Asp-305, Glu-319, and Asn-321.

It belongs to the D-alanine--D-alanine ligase family. Mg(2+) serves as cofactor. It depends on Mn(2+) as a cofactor.

The protein resides in the cytoplasm. It catalyses the reaction 2 D-alanine + ATP = D-alanyl-D-alanine + ADP + phosphate + H(+). It participates in cell wall biogenesis; peptidoglycan biosynthesis. Its function is as follows. Cell wall formation. This chain is D-alanine--D-alanine ligase, found in Chlorobaculum parvum (strain DSM 263 / NCIMB 8327) (Chlorobium vibrioforme subsp. thiosulfatophilum).